Consider the following 141-residue polypeptide: HTH-type transcriptional repressor NsrR (141 aa).

The 128-residue stretch at 2-129 (QLTNFTDYGL…DNYTLADLVE (128 aa)) folds into the HTH rrf2-type domain. The H-T-H motif DNA-binding region spans 28–51 (ISEVTDVYGVSRNHMVKIINQLSR). The [2Fe-2S] cluster site is built by C91, C96, and C102.

[2Fe-2S] cluster is required as a cofactor.

Functionally, nitric oxide-sensitive repressor of genes involved in protecting the cell against nitrosative stress. May require iron for activity. In Shigella boydii serotype 18 (strain CDC 3083-94 / BS512), this protein is HTH-type transcriptional repressor NsrR.